We begin with the raw amino-acid sequence, 441 residues long: Ribulose bisphosphate carboxylase (441 aa).

Lysine 160 (proton acceptor) is an active-site residue. A substrate-binding site is contributed by lysine 162. 3 residues coordinate Mg(2+): lysine 186, aspartate 188, and glutamate 189. Lysine 186 bears the N6-carboxylysine mark. The Proton acceptor role is filled by histidine 278. Residues arginine 279, histidine 311, 364–366, and 386–389 contribute to the substrate site; these read SGG and QVGG.

It belongs to the RuBisCO large chain family. Type III subfamily. Homodimer. In contrast to form I RuBisCO, the form III RuBisCO is composed solely of large subunits. It depends on Mg(2+) as a cofactor.

The enzyme catalyses 2 (2R)-3-phosphoglycerate + 2 H(+) = D-ribulose 1,5-bisphosphate + CO2 + H2O. It catalyses the reaction D-ribulose 1,5-bisphosphate + O2 = 2-phosphoglycolate + (2R)-3-phosphoglycerate + 2 H(+). Reversibly inhibited by O(2). Functionally, catalyzes the addition of molecular CO(2) and H(2)O to ribulose 1,5-bisphosphate (RuBP), generating two molecules of 3-phosphoglycerate (3-PGA). Functions in an archaeal AMP degradation pathway, together with AMP phosphorylase and R15P isomerase. The protein is Ribulose bisphosphate carboxylase of Archaeoglobus fulgidus (strain ATCC 49558 / DSM 4304 / JCM 9628 / NBRC 100126 / VC-16).